Reading from the N-terminus, the 144-residue chain is Protein SprT-like (144 aa).

The SprT-like domain maps to 4–143; the sequence is NKYVQEVSLQ…GKCRGKLTLK (140 aa). Residue His-64 coordinates Zn(2+). The active site involves Glu-65. Zn(2+) is bound at residue His-68.

It belongs to the SprT family. Requires Zn(2+) as cofactor.

The protein localises to the cytoplasm. This Streptococcus suis (strain 98HAH33) protein is Protein SprT-like.